The chain runs to 239 residues: NAD-dependent protein deacylase (239 aa).

The Deacetylase sirtuin-type domain maps to 1–234 (MENLNIVTLT…KKVYDYLREK (234 aa)). Residues 11-30 (GAGISAESGIPTFRGKDGLW) and 89-92 (QNVD) contribute to the NAD(+) site. Histidine 107 functions as the Proton acceptor in the catalytic mechanism. The Zn(2+) site is built by cysteine 115, cysteine 118, cysteine 136, and cysteine 139. NAD(+) is bound by residues 176–178 (GTS), 202–204 (NPE), and alanine 220.

This sequence belongs to the sirtuin family. Class III subfamily. The cofactor is Zn(2+).

It is found in the cytoplasm. It catalyses the reaction N(6)-acetyl-L-lysyl-[protein] + NAD(+) + H2O = 2''-O-acetyl-ADP-D-ribose + nicotinamide + L-lysyl-[protein]. NAD-dependent protein deacetylase which modulates the activities of several proteins which are inactive in their acetylated form. The sequence is that of NAD-dependent protein deacylase from Aquifex aeolicus (strain VF5).